A 224-amino-acid chain; its full sequence is Menaquinol:cytochrome c reductase cytochrome b subunit (224 aa).

The chain crosses the membrane as a helical span at residues 37 to 57; sequence FSAFVYCFGGLTFFVTVIQIL. Tyrosine 42 is a binding site for heme b. Cysteine 43 contacts heme c. The heme b site is built by arginine 91, histidine 94, histidine 108, and arginine 111. 3 helical membrane passes run 96-116, 126-146, and 195-215; these read WGASLVIVMMFLHTLRVFFQG, WIVGVLIFMVMMGLGFTGYLL, and IHVFFLPAALLGLMAAHFLMI. 2 residues coordinate heme b: histidine 196 and histidine 211. Heme c-binding residues include arginine 216 and isoleucine 220. Serine 221 serves as a coordination point for heme b.

It belongs to the cytochrome b family. The main subunits of the menaquinol:cytochrome c complex are a Rieske-type iron-sulfur protein (QcrA), a cytochrome b (QcrB) and a cytochrome c (QcrC). Heme b is required as a cofactor. Heme c serves as cofactor.

Its subcellular location is the cell membrane. Its function is as follows. Component of the menaquinol:cytochrome c reductase complex. The protein is Menaquinol:cytochrome c reductase cytochrome b subunit (qcrB) of Geobacillus thermodenitrificans.